Consider the following 410-residue polypeptide: L-sorbose 1-phosphate reductase (410 aa).

Positions 40, 69, and 70 each coordinate Zn(2+). NAD(+) is bound by residues arginine 221 and 309-310 (GT).

Belongs to the zinc-containing alcohol dehydrogenase family. The cofactor is Zn(2+).

Reduces L-sorbose 1-phosphate to D-glucitol 6-phosphate. In Klebsiella pneumoniae, this protein is L-sorbose 1-phosphate reductase (sorE).